A 346-amino-acid polypeptide reads, in one-letter code: tRNA N6-adenosine threonylcarbamoyltransferase (346 aa).

Positions 111 and 115 each coordinate Fe cation. Residues 134-138 (LVSGG), aspartate 167, glycine 180, and asparagine 279 contribute to the substrate site. Residue aspartate 307 participates in Fe cation binding.

It belongs to the KAE1 / TsaD family. Fe(2+) is required as a cofactor.

The protein localises to the cytoplasm. The catalysed reaction is L-threonylcarbamoyladenylate + adenosine(37) in tRNA = N(6)-L-threonylcarbamoyladenosine(37) in tRNA + AMP + H(+). Functionally, required for the formation of a threonylcarbamoyl group on adenosine at position 37 (t(6)A37) in tRNAs that read codons beginning with adenine. Is involved in the transfer of the threonylcarbamoyl moiety of threonylcarbamoyl-AMP (TC-AMP) to the N6 group of A37, together with TsaE and TsaB. TsaD likely plays a direct catalytic role in this reaction. The chain is tRNA N6-adenosine threonylcarbamoyltransferase from Burkholderia thailandensis (strain ATCC 700388 / DSM 13276 / CCUG 48851 / CIP 106301 / E264).